A 245-amino-acid chain; its full sequence is Geranylgeranylglyceryl phosphate synthase (245 aa).

Residues aspartate 22 and serine 51 each contribute to the Mg(2+) site. Residues tyrosine 169–glycine 175, glycine 200–glycine 201, and glycine 222–threonine 223 each bind sn-glycerol 1-phosphate.

Belongs to the GGGP/HepGP synthase family. Group II subfamily. As to quaternary structure, homotetramer. Homohexamer. It depends on Mg(2+) as a cofactor.

It is found in the cytoplasm. It catalyses the reaction sn-glycerol 1-phosphate + (2E,6E,10E)-geranylgeranyl diphosphate = sn-3-O-(geranylgeranyl)glycerol 1-phosphate + diphosphate. Its pathway is membrane lipid metabolism; glycerophospholipid metabolism. Its function is as follows. Prenyltransferase that catalyzes the transfer of the geranylgeranyl moiety of geranylgeranyl diphosphate (GGPP) to the C3 hydroxyl of sn-glycerol-1-phosphate (G1P). This reaction is the first ether-bond-formation step in the biosynthesis of archaeal membrane lipids. The chain is Geranylgeranylglyceryl phosphate synthase from Methanothermobacter thermautotrophicus (strain ATCC 29096 / DSM 1053 / JCM 10044 / NBRC 100330 / Delta H) (Methanobacterium thermoautotrophicum).